The chain runs to 399 residues: Endo-1,4-beta-xylanase C (399 aa).

A signal peptide spans 1 to 20 (MFKFSASLAALAALVPFVAA). One can recognise a CBM1 domain in the interval 21 to 56 (QSPEWGQCGGIGWTGPTTCVAGTTCVESNPYYSQCL). The GH10 domain maps to 81 to 396 (SAKLHTLAKA…KPAFNGIAAG (316 aa)). Glu212 acts as the Proton donor in catalysis. Glu318 (nucleophile) is an active-site residue. An intrachain disulfide couples Cys346 to Cys352.

This sequence belongs to the glycosyl hydrolase 10 (cellulase F) family.

The protein resides in the secreted. It carries out the reaction Endohydrolysis of (1-&gt;4)-beta-D-xylosidic linkages in xylans.. Its pathway is glycan degradation; xylan degradation. In terms of biological role, endo-1,4-beta-xylanase involved in the hydrolysis of xylan, a major structural heterogeneous polysaccharide found in plant biomass representing the second most abundant polysaccharide in the biosphere, after cellulose. The polypeptide is Endo-1,4-beta-xylanase C (xynC) (Phanerodontia chrysosporium (White-rot fungus)).